Consider the following 264-residue polypeptide: Type II iodothyronine deiodinase (264 aa).

Residues 1-7 are Lumenal-facing; it reads MGLLSVD. The helical; Signal-anchor for type III membrane protein transmembrane segment at 8-28 threads the bilayer; sequence LLITLQILPGFFSNCLFLALY. Over 29–264 the chain is Cytoplasmic; the sequence is DSVVLVKHVL…AESGQTGTEK (236 aa). Sec124 is an active-site residue. A non-standard amino acid (selenocysteine) is located at residue Sec124.

It belongs to the iodothyronine deiodinase family. As to quaternary structure, predominantly monomer. Can form homodimers but homodimerization is not essential for enzyme activity. As to expression, high levels seen in the metamorphosing tail.

It localises to the endoplasmic reticulum membrane. The enzyme catalyses 3,3',5-triiodo-L-thyronine + iodide + A + H(+) = L-thyroxine + AH2. It catalyses the reaction 3,3'-diiodo-L-thyronine + iodide + A + H(+) = 3,3',5'-triiodo-L-thyronine + AH2. The catalysed reaction is 3'-iodo-L-thyronine + iodide + A + H(+) = 3',5'-diiodo-L-thyronine + AH2. It carries out the reaction 3,3'-diiodothyronamine + iodide + A + H(+) = 3,3',5'-triiodothyronamine + AH2. The enzyme catalyses 3'-iodothyronamine + iodide + A + H(+) = 3',5'-diiodothyronamine + AH2. With respect to regulation, not inhibited by N(6)-propylthiouracil. In terms of biological role, plays a crucial role in the metabolism of thyroid hormones (TH) and has specific roles in TH activation and inactivation by deiodination. Catalyzes the deiodination of L-thyroxine (T4) to 3,5,3'-triiodothyronine (T3) and 3',5'-diiodothyronine (3',5'-T2) to 3'-monoiodothyronine (3'-T1) via outer-ring deiodination (ORD). Catalyzes the deiodination of 3,3',5'-triiodothyronine (rT3) to 3,3'-diiodothyronine (3,3'-T2) via ORD. Catalyzes the phenolic ring deiodinations of 3,3',5'-triiodothyronamine and 3',5'- diiodothyronamine. In Aquarana catesbeiana (American bullfrog), this protein is Type II iodothyronine deiodinase (dio2).